The sequence spans 540 residues: Chaperonin GroEL (540 aa).

ATP is bound by residues 30–33 (TLAP), Lys51, 87–91 (DGTTT), Gly415, 479–481 (NAA), and Asp495.

Belongs to the chaperonin (HSP60) family. As to quaternary structure, forms a cylinder of 14 subunits composed of two heptameric rings stacked back-to-back. Interacts with the co-chaperonin GroES.

The protein resides in the cytoplasm. The catalysed reaction is ATP + H2O + a folded polypeptide = ADP + phosphate + an unfolded polypeptide.. Together with its co-chaperonin GroES, plays an essential role in assisting protein folding. The GroEL-GroES system forms a nano-cage that allows encapsulation of the non-native substrate proteins and provides a physical environment optimized to promote and accelerate protein folding. The chain is Chaperonin GroEL from Methylovorus sp. (strain SS1 / DSM 11726).